We begin with the raw amino-acid sequence, 81 residues long: Cortexin-3 (81 aa).

The helical transmembrane segment at 29-49 threads the bilayer; the sequence is MTFVFVILLFIFLGILIVRCF.

This sequence belongs to the cortexin family.

It is found in the membrane. This Homo sapiens (Human) protein is Cortexin-3 (CTXN3).